Here is a 270-residue protein sequence, read N- to C-terminus: Tryptophan synthase alpha chain (270 aa).

Active-site proton acceptor residues include Glu-49 and Asp-60.

Belongs to the TrpA family. Tetramer of two alpha and two beta chains.

The catalysed reaction is (1S,2R)-1-C-(indol-3-yl)glycerol 3-phosphate + L-serine = D-glyceraldehyde 3-phosphate + L-tryptophan + H2O. The protein operates within amino-acid biosynthesis; L-tryptophan biosynthesis; L-tryptophan from chorismate: step 5/5. The alpha subunit is responsible for the aldol cleavage of indoleglycerol phosphate to indole and glyceraldehyde 3-phosphate. The polypeptide is Tryptophan synthase alpha chain (Thermobifida fusca (strain YX)).